Reading from the N-terminus, the 269-residue chain is Probable aquaporin TIP5-1 (269 aa).

5 helical membrane passes run 19 to 39, 54 to 74, 84 to 104, 139 to 159, and 177 to 197; these read AYFA…GSTI, SLMA…FIAA, AVTF…IFYW, FGAG…VHVA, and ALGA…AGSL. The short motif at 82–84 is the NPA 1 element; sequence NPA. An NPA 2 motif is present at residues 203–205; that stretch reads NPA. A helical membrane pass occupies residues 223–243; that stretch reads YWAGPMVGAAVAALVHQALVF.

It belongs to the MIP/aquaporin (TC 1.A.8) family. TIP (TC 1.A.8.10) subfamily. As to expression, expressed in leaves and anthers, and at lower levels in roots.

Its subcellular location is the vacuole membrane. Functionally, aquaporins facilitate the transport of water and small neutral solutes across cell membranes. May be involved in transport from the vacuolar compartment to the cytoplasm. The protein is Probable aquaporin TIP5-1 (TIP5;1) of Oryza sativa subsp. japonica (Rice).